Consider the following 259-residue polypeptide: Phosphatidylglycerol--prolipoprotein diacylglyceryl transferase (259 aa).

4 helical membrane passes run 9 to 29 (IIFS…VIGI), 55 to 75 (FITY…VLLY), 92 to 112 (EGGM…YLFC), and 117 to 137 (INFL…LFLG). Arg-138 contributes to the a 1,2-diacyl-sn-glycero-3-phospho-(1'-sn-glycerol) binding site. The next 3 membrane-spanning stretches (helical) occupy residues 172 to 192 (QLYE…YTTF), 201 to 221 (GLNS…IEIF), and 228 to 248 (IGFI…MLLL).

This sequence belongs to the Lgt family.

The protein localises to the cell inner membrane. The catalysed reaction is L-cysteinyl-[prolipoprotein] + a 1,2-diacyl-sn-glycero-3-phospho-(1'-sn-glycerol) = an S-1,2-diacyl-sn-glyceryl-L-cysteinyl-[prolipoprotein] + sn-glycerol 1-phosphate + H(+). It functions in the pathway protein modification; lipoprotein biosynthesis (diacylglyceryl transfer). Catalyzes the transfer of the diacylglyceryl group from phosphatidylglycerol to the sulfhydryl group of the N-terminal cysteine of a prolipoprotein, the first step in the formation of mature lipoproteins. This is Phosphatidylglycerol--prolipoprotein diacylglyceryl transferase from Rickettsia conorii (strain ATCC VR-613 / Malish 7).